Here is a 198-residue protein sequence, read N- to C-terminus: Ribonuclease HII (198 aa).

The RNase H type-2 domain maps to 10–198; it reads HLVAGVDEVG…PVRRALGIAS (189 aa). Aspartate 16, glutamate 17, and aspartate 108 together coordinate a divalent metal cation.

It belongs to the RNase HII family. Requires Mn(2+) as cofactor. It depends on Mg(2+) as a cofactor.

It localises to the cytoplasm. The catalysed reaction is Endonucleolytic cleavage to 5'-phosphomonoester.. In terms of biological role, endonuclease that specifically degrades the RNA of RNA-DNA hybrids. In Cronobacter sakazakii (strain ATCC BAA-894) (Enterobacter sakazakii), this protein is Ribonuclease HII.